We begin with the raw amino-acid sequence, 141 residues long: Hemoglobin subunit alpha (141 aa).

In terms of domain architecture, Globin spans 2-141 (AFTACEKQTI…ICQELSSRYR (140 aa)). H59 is an O2 binding site. H88 serves as a coordination point for heme b.

Belongs to the globin family. As to quaternary structure, heterotetramer of two alpha chains and two beta chains. Red blood cells.

Functionally, involved in oxygen transport from gills to the various peripheral tissues. The polypeptide is Hemoglobin subunit alpha (HBA) (Mustelus griseus (Spotless smooth-hound)).